A 62-amino-acid chain; its full sequence is Omega-conotoxin-like Bu11 (62 aa).

The signal sequence occupies residues 1–7; sequence ACQLITA. Residues 8-27 constitute a propeptide that is removed on maturation; that stretch reads EDSRGTQLHRALRSTSKVSK. Intrachain disulfides connect C31–C46, C38–C49, and C45–C56.

Belongs to the conotoxin O1 superfamily. Expressed by the venom duct.

Its subcellular location is the secreted. In terms of biological role, omega-conotoxins act at presynaptic membranes, they bind and block voltage-gated calcium channels (Cav). The chain is Omega-conotoxin-like Bu11 from Conus bullatus (Bubble cone).